The following is a 201-amino-acid chain: B-cell CLL/lymphoma 7 protein family member B-B (201 aa).

Residues 104–201 (QSNTKVDSSS…VCTEHNSTVS (98 aa)) are disordered.

This sequence belongs to the BCL7 family.

The chain is B-cell CLL/lymphoma 7 protein family member B-B from Danio rerio (Zebrafish).